A 561-amino-acid chain; its full sequence is DNA ligase B (561 aa).

Lys-125 acts as the N6-AMP-lysine intermediate in catalysis.

Belongs to the NAD-dependent DNA ligase family. LigB subfamily.

It carries out the reaction NAD(+) + (deoxyribonucleotide)n-3'-hydroxyl + 5'-phospho-(deoxyribonucleotide)m = (deoxyribonucleotide)n+m + AMP + beta-nicotinamide D-nucleotide.. Its function is as follows. Catalyzes the formation of phosphodiester linkages between 5'-phosphoryl and 3'-hydroxyl groups in double-stranded DNA using NAD as a coenzyme and as the energy source for the reaction. In Salmonella heidelberg (strain SL476), this protein is DNA ligase B.